Here is a 98-residue protein sequence, read N- to C-terminus: (4S)-4-hydroxy-5-phosphonooxypentane-2,3-dione isomerase (98 aa).

One can recognise an ABM domain in the interval Asn2–Phe91.

It belongs to the LsrG family. Homodimer.

The protein resides in the cytoplasm. The catalysed reaction is (2S)-2-hydroxy-3,4-dioxopentyl phosphate = 3-hydroxy-2,4-dioxopentyl phosphate. Functionally, involved in the degradation of phospho-AI-2, thereby terminating induction of the lsr operon and closing the AI-2 signaling cycle. Catalyzes the conversion of (4S)-4-hydroxy-5-phosphonooxypentane-2,3-dione (P-DPD) to 3-hydroxy-5-phosphonooxypentane-2,4-dione (P-HPD). This chain is (4S)-4-hydroxy-5-phosphonooxypentane-2,3-dione isomerase, found in Klebsiella pneumoniae subsp. pneumoniae (strain ATCC 700721 / MGH 78578).